Consider the following 183-residue polypeptide: Regulatory protein RecX (183 aa).

Polar residues predominate over residues Met1–Ser12. Residues Met1–Ala26 form a disordered region.

It belongs to the RecX family.

It is found in the cytoplasm. Modulates RecA activity. The chain is Regulatory protein RecX from Mycobacterium sp. (strain KMS).